The primary structure comprises 122 residues: Ribonuclease P protein component (122 aa).

It belongs to the RnpA family. In terms of assembly, consists of a catalytic RNA component (M1 or rnpB) and a protein subunit.

It carries out the reaction Endonucleolytic cleavage of RNA, removing 5'-extranucleotides from tRNA precursor.. Functionally, RNaseP catalyzes the removal of the 5'-leader sequence from pre-tRNA to produce the mature 5'-terminus. It can also cleave other RNA substrates such as 4.5S RNA. The protein component plays an auxiliary but essential role in vivo by binding to the 5'-leader sequence and broadening the substrate specificity of the ribozyme. This is Ribonuclease P protein component from Lactobacillus helveticus (strain DPC 4571).